The chain runs to 728 residues: Rho-related BTB domain-containing protein 2 (728 aa).

The interval 1–210 (MDSDMDYERP…DNAIRAALIS (210 aa)) is rho-like. Residues 21-28 (GDNAVGKT), 84-88 (DTFGD), and 140-143 (CQLD) each bind GTP. BTB domains are found at residues 266-333 (ADVI…HHHH) and 500-567 (SDVT…TSSP). The span at 304–313 (ELGGPSGSGG) shows a compositional bias: gly residues. Residues 304–333 (ELGGPSGSGGPRPEDHRSHPEQHHHHHHHH) form a disordered region. The segment covering 315 to 324 (RPEDHRSHPE) has biased composition (basic and acidic residues). The disordered stretch occupies residues 703 to 728 (FWNSPSSPSSSAAGSASPSSSSSAVV). Positions 706-728 (SPSSPSSSAAGSASPSSSSSAVV) are enriched in low complexity.

It belongs to the small GTPase superfamily. Rho family. In terms of assembly, interacts with HSP90AA1 and HSP90AB1. Forms a complex with CUL3 and RBX1. Interacts (via BTB 1 domain) with CUL3. Interacts with MSI2. In terms of processing, autoubiquitinated by RHOBTB2-CUL3-RBX1 ubiquitin ligase complex. Expressed in most tissues, with highest expression in brain.

Regulator of cell proliferation and apoptosis. It likely functions as a substrate-adapter that recruits key substrates, e.g. MSI2, to CUL3-based ubiquitin ligase complexes for degradation. Required for MSI2 ubiquitination and degradation. The protein is Rho-related BTB domain-containing protein 2 (Rhobtb2) of Mus musculus (Mouse).